The sequence spans 655 residues: Methylenetetrahydrofolate reductase (NADPH) (655 aa).

Residues 1–39 form a disordered region; the sequence is MVNEPRGNGSPGPRWEGSSSGSESSRTSSRCSTPGLDPE. A phosphoserine mark is found at S10, S18, S19, S20, S22, S24, S25, S28, and S29. Residues 11–35 are compositionally biased toward low complexity; that stretch reads PGPRWEGSSSGSESSRTSSRCSTPG. The residue at position 33 (T33) is a Phosphothreonine. E62 acts as the Proton donor/acceptor in catalysis. NAD(+) is bound by residues 62–67 and 93–94; these read EFFPPR and TW. The residue at position 93 (T93) is a Phosphothreonine. 93–94 is a binding site for FAD; the sequence is TW. Residue S102 is modified to Phosphoserine. Residues H126, 156–158, 173–174, Y196, 200–203, D209, and K216 each bind FAD; these read RGD, YA, and HPEG. D158 provides a ligand contact to substrate. Substrate contacts are provided by Q227, Y320, and R324. A Phosphoserine modification is found at S393. Phosphothreonine is present on T450. S-adenosyl-L-methionine contacts are provided by residues N455, 460–463, 480–484, T559, and T572; these read AAET and TINSQ.

It belongs to the methylenetetrahydrofolate reductase family. Homodimer. Requires FAD as cofactor. Post-translationally, phosphorylation of an N-terminal serine-rich phosphorylation region increases sensitivity to S-adenosylmethionine and inhibition.

It catalyses the reaction (6S)-5-methyl-5,6,7,8-tetrahydrofolate + NADP(+) = (6R)-5,10-methylene-5,6,7,8-tetrahydrofolate + NADPH + H(+). It participates in one-carbon metabolism; tetrahydrofolate interconversion. With respect to regulation, allosterically regulated by S-adenosylmethionine (SAM). Catalyzes the conversion of 5,10-methylenetetrahydrofolate to 5-methyltetrahydrofolate, a cosubstrate for homocysteine remethylation to methionine. Represents a key regulatory connection between the folate and methionine cycles. This Bos taurus (Bovine) protein is Methylenetetrahydrofolate reductase (NADPH) (MTHFR).